A 211-amino-acid chain; its full sequence is MRDIVIIGHKAKTSGDFSLNDLPGSAGRMDILCRCVSSALFLSFGMRRDVNVHLLLLGEPDPGKIIRFEGLHLRYLNPDERSSGSLIQKALLKNAAGQDIRSTPGVWTRTGDLNSLLASFEGRTLLYLREDGKDFREIAREIQDPVFILGDHTGVTEEEEKQLLEAGAQVISVGPISLHSNHCITLIHNELDRAEAERGEIPGGNISRPED.

Leucine 128, glycine 150, and cysteine 183 together coordinate S-adenosyl-L-methionine.

The protein belongs to the methyltransferase superfamily. TrmY family. In terms of assembly, homodimer.

Its subcellular location is the cytoplasm. It carries out the reaction pseudouridine(54) in tRNA + S-adenosyl-L-methionine = N(1)-methylpseudouridine(54) in tRNA + S-adenosyl-L-homocysteine + H(+). In terms of biological role, specifically catalyzes the N1-methylation of pseudouridine at position 54 (Psi54) in tRNAs. The protein is tRNA (pseudouridine(54)-N(1))-methyltransferase of Methanosarcina mazei (strain ATCC BAA-159 / DSM 3647 / Goe1 / Go1 / JCM 11833 / OCM 88) (Methanosarcina frisia).